A 245-amino-acid polypeptide reads, in one-letter code: Thiopurine S-methyltransferase (245 aa).

Ser14 bears the Phosphoserine mark. Residue 29 to 40 (WQDKWVNGNTAF) coordinates S-adenosyl-L-methionine. Residue Phe40 participates in substrate binding. Lys58 is subject to N6-acetyllysine. Residues Leu69, Glu90, 134–135 (SI), and Arg152 each bind S-adenosyl-L-methionine.

It belongs to the class I-like SAM-binding methyltransferase superfamily. TPMT family. In terms of assembly, monomer.

The protein localises to the cytoplasm. The enzyme catalyses S-adenosyl-L-methionine + a thiopurine = S-adenosyl-L-homocysteine + a thiopurine S-methylether.. This chain is Thiopurine S-methyltransferase (TPMT), found in Pongo pygmaeus (Bornean orangutan).